A 562-amino-acid chain; its full sequence is Adenylate kinase isoenzyme 5 (562 aa).

Adenylate kinase stretches follow at residues 133–316 and 377–559; these read KIIL…MAVD and KIIF…TAID. An ATP-binding site is contributed by 142–147; sequence GSGKGT. The NMP 1 stretch occupies residues 162–193; sequence SVGELLRKKIHSTSSNRKWSLIAKIITTGELA. AMP-binding positions include Arg168, 191–193, 219–222, and Gln226; these read ELA and GFPR. An LID 1 region spans residues 256-266; it reads KRAEQQGRPDD. Arg257 provides a ligand contact to ATP. Positions 263 and 274 each coordinate AMP. 386–391 is a binding site for ATP; it reads GSGKGT. The NMP 2 stretch occupies residues 406-435; that stretch reads STDELLQNELSSESGRSKLIRDIMERGELV. Residues Thr407, 433–435, 462–465, and Gln469 contribute to the AMP site; these read ELV and GYPR. Residues 499-509 form an LID 2 region; the sequence is QRSRNSPQADD. Residue Arg500 participates in ATP binding. Arg517 serves as a coordination point for AMP. Residue Gly545 participates in ATP binding.

Belongs to the adenylate kinase family. Monomer.

The protein localises to the cytoplasm. It carries out the reaction AMP + ATP = 2 ADP. The catalysed reaction is a 2'-deoxyribonucleoside 5'-diphosphate + ATP = a 2'-deoxyribonucleoside 5'-triphosphate + ADP. The enzyme catalyses a ribonucleoside 5'-diphosphate + ATP = a ribonucleoside 5'-triphosphate + ADP. Nucleoside monophosphate (NMP) kinase that catalyzes the reversible transfer of the terminal phosphate group between nucleoside triphosphates and monophosphates. Active on AMP and dAMP with ATP as a donor. When GTP is used as phosphate donor, the enzyme phosphorylates AMP, CMP, and to a small extent dCMP. Also displays broad nucleoside diphosphate kinase activity. This is Adenylate kinase isoenzyme 5 (Ak5) from Bos taurus (Bovine).